Here is a 79-residue protein sequence, read N- to C-terminus: Cell division protein ZapB (79 aa).

Residues 6 to 78 are a coiled coil; sequence FEKLEVKVQQ…LRALLGKMEE (73 aa).

It belongs to the ZapB family. In terms of assembly, homodimer. The ends of the coiled-coil dimer bind to each other, forming polymers. Interacts with FtsZ.

Its subcellular location is the cytoplasm. Non-essential, abundant cell division factor that is required for proper Z-ring formation. It is recruited early to the divisome by direct interaction with FtsZ, stimulating Z-ring assembly and thereby promoting cell division earlier in the cell cycle. Its recruitment to the Z-ring requires functional FtsA or ZipA. The protein is Cell division protein ZapB of Yersinia pseudotuberculosis serotype O:1b (strain IP 31758).